A 392-amino-acid chain; its full sequence is Flavohemoprotein (392 aa).

Residues 1-139 (MLNAEQRAII…LADILIGAEE (139 aa)) form the Globin domain. His-85 is a heme b binding site. Active-site charge relay system residues include Tyr-95 and Glu-138. The segment at 150-392 (GGWRGTREFR…EFFGPAAALE (243 aa)) is reductase. The 104-residue stretch at 153-256 (RGTREFRLVR…FPPAGDFTLA (104 aa)) folds into the FAD-binding FR-type domain. FAD is bound by residues Tyr-191 and 205-208 (RNYS). 268 to 273 (GVGITP) contributes to the NADP(+) binding site. Residue 384-387 (FFGP) participates in FAD binding.

Belongs to the globin family. Two-domain flavohemoproteins subfamily. It in the C-terminal section; belongs to the flavoprotein pyridine nucleotide cytochrome reductase family. Requires heme b as cofactor. FAD is required as a cofactor.

The catalysed reaction is 2 nitric oxide + NADPH + 2 O2 = 2 nitrate + NADP(+) + H(+). The enzyme catalyses 2 nitric oxide + NADH + 2 O2 = 2 nitrate + NAD(+) + H(+). Is involved in NO detoxification in an aerobic process, termed nitric oxide dioxygenase (NOD) reaction that utilizes O(2) and NAD(P)H to convert NO to nitrate, which protects the bacterium from various noxious nitrogen compounds. Therefore, plays a central role in the inducible response to nitrosative stress. In Pseudomonas putida (strain ATCC 47054 / DSM 6125 / CFBP 8728 / NCIMB 11950 / KT2440), this protein is Flavohemoprotein.